Reading from the N-terminus, the 470-residue chain is Glutamate--tRNA ligase (470 aa).

Positions Pro9 to Gly19 match the 'HIGH' region motif. A 'KMSKS' region motif is present at residues Arg236–Arg240. Residue Lys239 coordinates ATP.

The protein belongs to the class-I aminoacyl-tRNA synthetase family. Glutamate--tRNA ligase type 1 subfamily. Monomer.

Its subcellular location is the cytoplasm. The enzyme catalyses tRNA(Glu) + L-glutamate + ATP = L-glutamyl-tRNA(Glu) + AMP + diphosphate. Functionally, catalyzes the attachment of glutamate to tRNA(Glu) in a two-step reaction: glutamate is first activated by ATP to form Glu-AMP and then transferred to the acceptor end of tRNA(Glu). The sequence is that of Glutamate--tRNA ligase from Legionella pneumophila (strain Paris).